The sequence spans 729 residues: Monosaccharide-sensing protein 2 (729 aa).

6 consecutive transmembrane segments (helical) span residues 1–21, 47–67, 81–101, 104–124, 139–159, and 165–185; these read MSGA…QGWD, LIVA…GGVA, ILYF…VLLL, LLDG…ISET, FTGS…SLMP, and LMLG…VFFL. The segment covering 347–363 has biased composition (acidic residues); the sequence is VGEGEDYPSDHGDDSED. 2 disordered regions span residues 347–367 and 423–442; these read VGEG…DLHS and ERED…RRGS. Positions 423 to 434 are enriched in basic and acidic residues; it reads EREDESGQKEEG. A phosphoserine mark is found at Ser-438 and Gly-448. A run of 6 helical transmembrane segments spans residues 507-527, 553-573, 585-605, 610-630, 650-670, and 679-699; these read ALVV…NGVL, ASLL…AVAM, LLTT…SNLV, IVHA…FVMG, ICIA…TYSL, and LAGV…FVFI.

The protein belongs to the major facilitator superfamily. Sugar transporter (TC 2.A.1.1) family. In terms of tissue distribution, mostly expressed in roots and stems, and, to a lower extent, in juvenile and adult leaves, and in flower tissues.

It localises to the vacuole membrane. It carries out the reaction D-glucose(out) + H(+)(in) = D-glucose(in) + H(+)(out). It catalyses the reaction sucrose(out) + H(+)(in) = sucrose(in) + H(+)(out). Functionally, sugar proton-coupled antiporter which contributes to vacuolar sugar import (e.g. monosaccharides including glucose, sucrose and fructose), particularly during stress responses (e.g. in response to cold). This Arabidopsis thaliana (Mouse-ear cress) protein is Monosaccharide-sensing protein 2.